The chain runs to 500 residues: Cholesterol 24-hydroxylase (500 aa).

Residues 3 to 23 (PGLLLLGSAVLLAFGLCCTFV) form a helical membrane-spanning segment. Cys-437 contributes to the heme binding site.

It belongs to the cytochrome P450 family. Heme is required as a cofactor. Expressed in high level in the pyramidal cells of the hippocampus, Purkinje cells of the cerebellum, and neuronal cell bodies in layers II/III, V, and VI of the cortex. Expressed in hippocampal and cerebellar interneurons, in retinal ganglion cells, and in a subset of retinal cells localized to the inner nuclear layer (at protein level).

It is found in the endoplasmic reticulum membrane. Its subcellular location is the microsome membrane. The protein resides in the postsynapse. It localises to the presynapse. The protein localises to the cell projection. It is found in the dendrite. It catalyses the reaction cholesterol + reduced [NADPH--hemoprotein reductase] + O2 = (24S)-hydroxycholesterol + oxidized [NADPH--hemoprotein reductase] + H2O + H(+). It carries out the reaction cholestanol + reduced [NADPH--hemoprotein reductase] + O2 = (24S)-hydroxycholestanol + oxidized [NADPH--hemoprotein reductase] + H2O + H(+). The enzyme catalyses 7-dehydrocholesterol + reduced [NADPH--hemoprotein reductase] + O2 = cholesta-5,7-dien-3beta,24S-diol + oxidized [NADPH--hemoprotein reductase] + H2O + H(+). The catalysed reaction is 7-dehydrocholesterol + reduced [NADPH--hemoprotein reductase] + O2 = cholesta-5,7-dien-3beta,25-diol + oxidized [NADPH--hemoprotein reductase] + H2O + H(+). It catalyses the reaction desmosterol + reduced [NADPH--hemoprotein reductase] + O2 = (24Z),26-hydroxydesmosterol + oxidized [NADPH--hemoprotein reductase] + H2O + H(+). It carries out the reaction desmosterol + reduced [NADPH--hemoprotein reductase] + O2 = (24S)-25-epoxycholesterol + oxidized [NADPH--hemoprotein reductase] + H2O + H(+). The enzyme catalyses 4beta-hydroxycholesterol + reduced [NADPH--hemoprotein reductase] + O2 = 4beta,24S-dihydroxycholesterol + oxidized [NADPH--hemoprotein reductase] + H2O + H(+). The catalysed reaction is (24S)-hydroxycholesterol + reduced [NADPH--hemoprotein reductase] + O2 = (24S,25R)-24,26-dihydroxycholesterol + oxidized [NADPH--hemoprotein reductase] + H2O + H(+). It catalyses the reaction (24S)-hydroxycholesterol + reduced [NADPH--hemoprotein reductase] + O2 = 24S,25-dihydroxycholesterol + oxidized [NADPH--hemoprotein reductase] + H2O + H(+). It carries out the reaction 7alpha-hydroxycholesterol + reduced [NADPH--hemoprotein reductase] + O2 = (24S)-7alpha-dihydroxycholesterol + oxidized [NADPH--hemoprotein reductase] + H2O + H(+). The enzyme catalyses progesterone + reduced [NADPH--hemoprotein reductase] + O2 = 17alpha-hydroxyprogesterone + oxidized [NADPH--hemoprotein reductase] + H2O + H(+). The catalysed reaction is testosterone + reduced [NADPH--hemoprotein reductase] + O2 = 16beta,17beta-dihydroxyandrost-4-en-3-one + oxidized [NADPH--hemoprotein reductase] + H2O + H(+). It catalyses the reaction testosterone + reduced [NADPH--hemoprotein reductase] + O2 = 2-hydroxytestosterone + oxidized [NADPH--hemoprotein reductase] + H2O + H(+). It carries out the reaction testosterone + reduced [NADPH--hemoprotein reductase] + O2 = 6beta,17beta-dihydroxyandrost-4-en-3-one + oxidized [NADPH--hemoprotein reductase] + H2O + H(+). It functions in the pathway steroid metabolism; cholesterol degradation. Its pathway is lipid metabolism; C21-steroid hormone metabolism. Its function is as follows. P450 monooxygenase that plays a major role in cholesterol homeostasis in the brain. Primarily catalyzes the hydroxylation (with S stereochemistry) at C-24 of cholesterol side chain, triggering cholesterol diffusion out of neurons and its further degradation. By promoting constant cholesterol elimination in neurons, may activate the mevalonate pathway and coordinate the synthesis of new cholesterol and nonsterol isoprenoids involved in synaptic activity and learning. Further hydroxylates cholesterol derivatives and hormone steroids on both the ring and side chain of these molecules, converting them into active oxysterols involved in lipid signaling and biosynthesis. Acts as an epoxidase converting cholesta-5,24-dien-3beta-ol/desmosterol into (24S),25-epoxycholesterol, an abundant lipid ligand of nuclear NR1H2 and NR1H3 receptors shown to promote neurogenesis in developing brain. May also catalyze the oxidative metabolism of xenobiotics, such as clotrimazole. In Mus musculus (Mouse), this protein is Cholesterol 24-hydroxylase.